We begin with the raw amino-acid sequence, 233 residues long: Large ribosomal subunit protein uL3 (233 aa).

Positions 146 to 171 (GSQRASHGNSRSHRVPGSIGQAQDPG) are disordered. Gln168 is modified (N5-methylglutamine).

The protein belongs to the universal ribosomal protein uL3 family. In terms of assembly, part of the 50S ribosomal subunit. Forms a cluster with proteins L14 and L19. In terms of processing, methylated by PrmB.

Its function is as follows. One of the primary rRNA binding proteins, it binds directly near the 3'-end of the 23S rRNA, where it nucleates assembly of the 50S subunit. The polypeptide is Large ribosomal subunit protein uL3 (Bordetella bronchiseptica (strain ATCC BAA-588 / NCTC 13252 / RB50) (Alcaligenes bronchisepticus)).